The sequence spans 214 residues: ATP phosphoribosyltransferase (214 aa).

It belongs to the ATP phosphoribosyltransferase family. Short subfamily. As to quaternary structure, heteromultimer composed of HisG and HisZ subunits.

It localises to the cytoplasm. The catalysed reaction is 1-(5-phospho-beta-D-ribosyl)-ATP + diphosphate = 5-phospho-alpha-D-ribose 1-diphosphate + ATP. The protein operates within amino-acid biosynthesis; L-histidine biosynthesis; L-histidine from 5-phospho-alpha-D-ribose 1-diphosphate: step 1/9. Functionally, catalyzes the condensation of ATP and 5-phosphoribose 1-diphosphate to form N'-(5'-phosphoribosyl)-ATP (PR-ATP). Has a crucial role in the pathway because the rate of histidine biosynthesis seems to be controlled primarily by regulation of HisG enzymatic activity. The polypeptide is ATP phosphoribosyltransferase (hisG) (Nostoc sp. (strain PCC 7120 / SAG 25.82 / UTEX 2576)).